A 518-amino-acid polypeptide reads, in one-letter code: Gypsy retrotransposon integrase-like protein 1 (518 aa).

In terms of domain architecture, Integrase catalytic spans 135-293; it reads VVGNPWSVVT…PYFQMFNRNP (159 aa). The disordered stretch occupies residues 326–348; it reads NQTPAAGQMESSTSEELSKSKVA. Position 498 is a phosphoserine (serine 498).

This is Gypsy retrotransposon integrase-like protein 1 (GIN1) from Rattus norvegicus (Rat).